The primary structure comprises 156 residues: Small ribosomal subunit protein uS7 (156 aa).

This sequence belongs to the universal ribosomal protein uS7 family. Part of the 30S ribosomal subunit. Contacts proteins S9 and S11.

Functionally, one of the primary rRNA binding proteins, it binds directly to 16S rRNA where it nucleates assembly of the head domain of the 30S subunit. Is located at the subunit interface close to the decoding center, probably blocks exit of the E-site tRNA. The sequence is that of Small ribosomal subunit protein uS7 from Geobacillus sp. (strain WCH70).